A 240-amino-acid polypeptide reads, in one-letter code: Protein MGARP (240 aa).

At 1–40 (MYLRRAVSKTLALPLRAPPNPAPLGKDASLRRMSSNRFPG) the chain is on the cytoplasmic side. A helical; Anchor for type IV membrane protein membrane pass occupies residues 41–63 (SSGSNMIYYLVVGVTVSAGGYYA). Topologically, residues 64 to 240 (YKTVTSDQAK…VGSEAASAQG (177 aa)) are mitochondrial intermembrane. Residues 166-240 (RETTEVNPET…VGSEAASAQG (75 aa)) form a disordered region. Positions 170–181 (EVNPETTPEVTN) are enriched in low complexity. Basic and acidic residues predominate over residues 191–201 (DNDKDTTKNET). Over residues 202 to 213 (SDEYAELEEENS) the composition is skewed to acidic residues. Residues 228–240 (EASVGSEAASAQG) show a composition bias toward low complexity.

Interacts with RHOT1/Miro-1, TRAK1/OIP106 and TRAK2/GRIF1. Interacts with RHOT2/Miro-2. Expressed in the brain, adrenal gland and corneal endothelium (CE). Expressed in steroid-producing cells of the ovary and testis (at protein level). Expressed in steroid-producing cells of the ovary and testis. Weakly expressed in placenta. Expressed in corneal endothelial cells.

It is found in the mitochondrion. The protein localises to the mitochondrion outer membrane. Its subcellular location is the mitochondrion inner membrane. Functionally, plays a role in the trafficking of mitochondria along microtubules. Regulates the kinesin-mediated axonal transport of mitochondria to nerve terminals along microtubules during hypoxia. Participates in the translocation of TRAK2/GRIF1 from the cytoplasm to the mitochondrion. Also plays a role in steroidogenesis through maintenance of mitochondrial abundance and morphology. Plays an inhibitory role during neocortex development by regulating mitochondrial morphology, distribution and motility in neocortical neurons. The polypeptide is Protein MGARP (MGARP) (Homo sapiens (Human)).